The primary structure comprises 74 residues: UPF0154 protein LVIS_1358 (74 aa).

A helical membrane pass occupies residues 4–24 (WIWILIVIVVGLACAAGGFYG).

The protein belongs to the UPF0154 family.

The protein resides in the cell membrane. This Levilactobacillus brevis (strain ATCC 367 / BCRC 12310 / CIP 105137 / JCM 1170 / LMG 11437 / NCIMB 947 / NCTC 947) (Lactobacillus brevis) protein is UPF0154 protein LVIS_1358.